A 178-amino-acid polypeptide reads, in one-letter code: RNA pyrophosphohydrolase (178 aa).

In terms of domain architecture, Nudix hydrolase spans 18–171 (PYRPCVGLMV…KRKVYEQVVA (154 aa)). The Nudix box motif lies at 59–80 (GGIDKGEDPAQAALRELYEETG).

It belongs to the Nudix hydrolase family. RppH subfamily. A divalent metal cation is required as a cofactor.

Functionally, accelerates the degradation of transcripts by removing pyrophosphate from the 5'-end of triphosphorylated RNA, leading to a more labile monophosphorylated state that can stimulate subsequent ribonuclease cleavage. The protein is RNA pyrophosphohydrolase of Brucella abortus (strain 2308).